The primary structure comprises 826 residues: Lon protease (826 aa).

Positions 26 to 221 constitute a Lon N-terminal domain; it reads LPMLPVRDVV…AVNGFVSREV (196 aa). 373-380 contributes to the ATP binding site; it reads GPPGVGKT. The Lon proteolytic domain maps to 609–790; it reads EPQIGLATGL…NEVLEKALLP (182 aa). Catalysis depends on residues serine 696 and lysine 739. The interval 788 to 826 is disordered; it reads LLPAEKKKAPPKKKPPKKAAKPKAKKTQPKAKTTEAADK. Residues 796-816 are compositionally biased toward basic residues; sequence APPKKKPPKKAAKPKAKKTQP.

Belongs to the peptidase S16 family. As to quaternary structure, homohexamer. Organized in a ring with a central cavity.

It localises to the cytoplasm. It catalyses the reaction Hydrolysis of proteins in presence of ATP.. In terms of biological role, ATP-dependent serine protease that mediates the selective degradation of mutant and abnormal proteins as well as certain short-lived regulatory proteins. Required for cellular homeostasis and for survival from DNA damage and developmental changes induced by stress. Degrades polypeptides processively to yield small peptide fragments that are 5 to 10 amino acids long. Binds to DNA in a double-stranded, site-specific manner. The polypeptide is Lon protease (Desulfatibacillum aliphaticivorans).